Consider the following 175-residue polypeptide: Large ribosomal subunit protein uL6 (175 aa).

Belongs to the universal ribosomal protein uL6 family. Part of the 50S ribosomal subunit.

In terms of biological role, this protein binds to the 23S rRNA, and is important in its secondary structure. It is located near the subunit interface in the base of the L7/L12 stalk, and near the tRNA binding site of the peptidyltransferase center. The chain is Large ribosomal subunit protein uL6 from Xylella fastidiosa (strain M23).